The chain runs to 565 residues: Urocanate hydratase (565 aa).

NAD(+) is bound by residues 61 to 62 (GG), Gln139, 185 to 187 (GMG), Glu205, Arg210, 251 to 252 (NA), 272 to 276 (QTSAH), 282 to 283 (YL), and Tyr331. Cys419 is an active-site residue. The interval 453-472 (LDSGSVSSPNRETESMKDGS) is disordered. The segment covering 463-472 (RETESMKDGS) has biased composition (basic and acidic residues). Gly501 is a binding site for NAD(+).

The protein belongs to the urocanase family. The cofactor is NAD(+).

The protein resides in the cytoplasm. It carries out the reaction 4-imidazolone-5-propanoate = trans-urocanate + H2O. Its pathway is amino-acid degradation; L-histidine degradation into L-glutamate; N-formimidoyl-L-glutamate from L-histidine: step 2/3. Its function is as follows. Catalyzes the conversion of urocanate to 4-imidazolone-5-propionate. This chain is Urocanate hydratase, found in Pseudomonas syringae.